The sequence spans 266 residues: Putative hydro-lyase VF_1377 (266 aa).

This sequence belongs to the D-glutamate cyclase family.

The protein is Putative hydro-lyase VF_1377 of Aliivibrio fischeri (strain ATCC 700601 / ES114) (Vibrio fischeri).